The primary structure comprises 646 residues: Cartilage acidic protein 1 (646 aa).

An N-terminal signal peptide occupies residues 1–28 (MAPSADPGMVRMALLLLPPLWLLPLTGG). The stretch at 47–89 (DYDSNPTQLNYGVAVTDVDHDGDFEIVVAGYTGPNLVLKYNRA) is one FG-GAP 1; atypical repeat. Residues 106-148 (YALRDRQGNAIGVTACDIDGDGREEIYFLNTNNAFSGVATYTD) form an FG-GAP 2; atypical repeat. One copy of the FG-GAP 3; atypical repeat lies at 284 to 334 (AGVDDPHQHGRGVALADFNRDGKVDIVYGNWNGPHRLYLQMSAHGKVRFRD). The FG-GAP 4; atypical repeat unit spans residues 396-438 (GDALEPEGRGTGGVVTDFDGDGMLDLILSHGESMAQPLSVFRG). The region spanning 560–606 (DTNECIQFPFVCPRDKPVCVNTYGSYRCRTNKRCNRGYEPNEDGTAC) is the EGF-like domain. 3 cysteine pairs are disulfide-bonded: Cys-564-Cys-578, Cys-571-Cys-587, and Cys-593-Cys-606.

It is found in the secreted. The protein localises to the extracellular space. Its subcellular location is the extracellular matrix. The polypeptide is Cartilage acidic protein 1 (Crtac1) (Mus musculus (Mouse)).